Here is a 368-residue protein sequence, read N- to C-terminus: MVVPTPFYVLRGHSSSVTSVLFDANEYLYSGDEAGFVICWCLTSMRPKCAWRAHTKTILGMQIVKGGALCTHGRDCRLVTWKIDFNCMTDNFMSLSKLAELQNYGPEASSETEKSSAFISIHSNIVVNSLTFCPFSYSPQSKIVVLCNTLNFEELDVYDDESLYHPQTHKEDCGKRLQTRIQPEESVGKTGSVMSTSVTVTDEKYVLLAAGYESGHVVQYICSLENVKTVTLDFKAVWKMVYAYKSHSQPVLSVEYAGSKLFSTGADDCICLHPTPSSIADDLGSLPHPIFRKTKHCGQQNIRIRSDNKILATAGWDGRGRVYSCQTLAPLAVLKYHSDGINSLAFHPGSNVIALASKDTRISLWKLY.

WD repeat units lie at residues 12–50 (GHSSSVTSVLFDANEYLYSGDEAGFVICWCLTSMRPKCA), 53–91 (AHTKTILGMQIVKGGALCTHGRDCRLVTWKIDFNCMTDN), 246–283 (SHSQPVLSVEYAGSKLFSTGADDCICLHPTPSSIADDL), 294–333 (TKHCGQQNIRIRSDNKILATAGWDGRGRVYSCQTLAPLAV), and 336–368 (YHSDGINSLAFHPGSNVIALASKDTRISLWKLY).

It belongs to the WD repeat ASA1 family. Component of the ASTRA chromatin-remodeling machinery complex.

The protein localises to the cytoplasm. It is found in the nucleus. Functionally, component of the ASTRA complex probably involved in chromatin remodeling. The protein is ASTRA-associated protein 1 (asa1) of Schizosaccharomyces pombe (strain 972 / ATCC 24843) (Fission yeast).